Reading from the N-terminus, the 731-residue chain is Polyribonucleotide nucleotidyltransferase (731 aa).

2 residues coordinate Mg(2+): D488 and D494. A KH domain is found at 555-614 (PRIEVINIAVDKIRDVIGSGGKVIREIVEQTGAKINIEDDGTIKIASADAKTIEAAKRWI). An S1 motif domain is found at 624-692 (GAIYQGTVVK…ERGKVRLSMK (69 aa)). Residues 693 to 731 (AVDQKTGKEMTDDKSVKEEKCMDEKKQPENKRRRKKKEE) are disordered. Over residues 694 to 722 (VDQKTGKEMTDDKSVKEEKCMDEKKQPEN) the composition is skewed to basic and acidic residues.

It belongs to the polyribonucleotide nucleotidyltransferase family. It depends on Mg(2+) as a cofactor.

Its subcellular location is the cytoplasm. It carries out the reaction RNA(n+1) + phosphate = RNA(n) + a ribonucleoside 5'-diphosphate. Involved in mRNA degradation. Catalyzes the phosphorolysis of single-stranded polyribonucleotides processively in the 3'- to 5'-direction. This is Polyribonucleotide nucleotidyltransferase from Bartonella tribocorum (strain CIP 105476 / IBS 506).